We begin with the raw amino-acid sequence, 154 residues long: Large ribosomal subunit protein uL30 (154 aa).

This sequence belongs to the universal ribosomal protein uL30 family. As to quaternary structure, part of the 50S ribosomal subunit.

The protein is Large ribosomal subunit protein uL30 of Methanoregula boonei (strain DSM 21154 / JCM 14090 / 6A8).